A 289-amino-acid polypeptide reads, in one-letter code: Spore coat polysaccharide biosynthesis protein SpsD (289 aa).

One can recognise an N-acetyltransferase domain in the interval 137–289 (FELGPPEPGD…YHIWPGKEAK (153 aa)).

Its pathway is spore coat biogenesis; spore coat polysaccharide biosynthesis. The polypeptide is Spore coat polysaccharide biosynthesis protein SpsD (spsD) (Bacillus subtilis (strain 168)).